We begin with the raw amino-acid sequence, 130 residues long: Glycine cleavage system H protein (130 aa).

A Lipoyl-binding domain is found at 24–106 (GIKVGISAFA…YQEGWLLKIT (83 aa)). Lys-65 bears the N6-lipoyllysine mark.

It belongs to the GcvH family. The glycine cleavage system is composed of four proteins: P, T, L and H. (R)-lipoate serves as cofactor.

Its function is as follows. The glycine cleavage system catalyzes the degradation of glycine. The H protein shuttles the methylamine group of glycine from the P protein to the T protein. The sequence is that of Glycine cleavage system H protein from Synechococcus sp. (strain RCC307).